We begin with the raw amino-acid sequence, 2376 residues long: Protein Ycf2 (2376 aa).

Disordered regions lie at residues 173 to 194 (SSQLKGSSDQSRDHFDSIGTED), 226 to 256 (TEIESDRFSKGLSGSSSKSRLFTEGEKEMNN), and 952 to 1011 (KRKK…KRKE). A compositionally biased stretch (low complexity) spans 235 to 245 (KGLSGSSSKSR). Basic and acidic residues-rich tracts occupy residues 246-255 (LFTEGEKEMN) and 960-1009 (KRKE…PEKR). ATP is bound at residue 1441–1448 (GSIGSGRS). Disordered regions lie at residues 1515–1534 (YEDRDSDDYDEPGASDDYEP), 1860–2046 (LVGS…LRPK), and 2112–2230 (PAEE…DGFS). Acidic residues predominate over residues 1866-2025 (TEEEVEGTEE…GEGTEDEEGE (160 aa)). Over residues 2026–2038 (GTEKDSSQFDNDR) the composition is skewed to basic and acidic residues. 2 stretches are compositionally biased toward acidic residues: residues 2112–2129 (PAEEIPEEEDPLPEEALE) and 2136–2213 (GEEE…ENDS).

It belongs to the Ycf2 family.

Its subcellular location is the plastid. It localises to the chloroplast stroma. Probable ATPase of unknown function. Its presence in a non-photosynthetic plant (Epifagus virginiana) and experiments in tobacco indicate that it has an essential function which is probably not related to photosynthesis. In Oenothera glazioviana (Large-flowered evening primrose), this protein is Protein Ycf2.